The primary structure comprises 300 residues: 33 kDa chaperonin (300 aa).

2 disulfides stabilise this stretch: C247/C249 and C280/C283.

It belongs to the HSP33 family. In terms of processing, under oxidizing conditions two disulfide bonds are formed involving the reactive cysteines. Under reducing conditions zinc is bound to the reactive cysteines and the protein is inactive.

Its subcellular location is the cytoplasm. In terms of biological role, redox regulated molecular chaperone. Protects both thermally unfolding and oxidatively damaged proteins from irreversible aggregation. Plays an important role in the bacterial defense system toward oxidative stress. This is 33 kDa chaperonin from Prochlorococcus marinus subsp. pastoris (strain CCMP1986 / NIES-2087 / MED4).